The chain runs to 290 residues: Pirin (290 aa).

Fe cation contacts are provided by His56, His58, His101, and Glu103.

The protein belongs to the pirin family. May interact with NF1/CTF1. Interacts with BCL3. Identified in a complex comprised of PIR, BLC3, NFKB1 and target DNA. Requires Fe cation as cofactor. As to expression, highly expressed in a subset of melanomas. Detected at very low levels in most tissues (at protein level). Expressed in all tissues, with highest level of expression in heart and liver.

Its subcellular location is the nucleus. The protein localises to the cytoplasm. It catalyses the reaction quercetin + O2 = 2-(3,4-dihydroxybenzoyloxy)-4,6-dihydroxybenzoate + CO. The protein operates within flavonoid metabolism; quercetin degradation. Inhibited by kojic acid, sodium diethyldithiocarbamate and 1,10-phenanthroline monohydrochloride. Its function is as follows. Transcriptional coregulator of NF-kappa-B which facilitates binding of NF-kappa-B proteins to target kappa-B genes in a redox-state-dependent manner. May be required for efficient terminal myeloid maturation of hematopoietic cells. Has quercetin 2,3-dioxygenase activity (in vitro). The polypeptide is Pirin (PIR) (Homo sapiens (Human)).